The primary structure comprises 97 residues: Cobalt transport protein CbiN (97 aa).

2 helical membrane passes run 6-26 (VLMILGVIILILAPLIMYSGL) and 68-88 (SLLFALQAAIGAIIIGYFFGY).

It belongs to the CbiN family. Forms an energy-coupling factor (ECF) transporter complex composed of an ATP-binding protein (A component, CbiO), a transmembrane protein (T component, CbiQ) and 2 possible substrate-capture proteins (S components, CbiM and CbiN) of unknown stoichimetry.

It localises to the cell membrane. It participates in cofactor biosynthesis; adenosylcobalamin biosynthesis. Functionally, part of the energy-coupling factor (ECF) transporter complex CbiMNOQ involved in cobalt import. In Methanococcus maripaludis (strain C5 / ATCC BAA-1333), this protein is Cobalt transport protein CbiN.